The following is a 344-amino-acid chain: 3-isopropylmalate dehydrogenase (344 aa).

74 to 87 (GPKWDALPRKIRPE) provides a ligand contact to NAD(+). Residues Arg94, Arg104, Arg132, and Asp217 each contribute to the substrate site. Asp217, Asp241, and Asp245 together coordinate Mg(2+). Residue 274–286 (GSAPDIAGKGIAN) coordinates NAD(+).

It belongs to the isocitrate and isopropylmalate dehydrogenases family. LeuB type 1 subfamily. As to quaternary structure, homodimer. The cofactor is Mg(2+). Requires Mn(2+) as cofactor.

The protein resides in the cytoplasm. It carries out the reaction (2R,3S)-3-isopropylmalate + NAD(+) = 4-methyl-2-oxopentanoate + CO2 + NADH. Its pathway is amino-acid biosynthesis; L-leucine biosynthesis; L-leucine from 3-methyl-2-oxobutanoate: step 3/4. Its function is as follows. Catalyzes the oxidation of 3-carboxy-2-hydroxy-4-methylpentanoate (3-isopropylmalate) to 3-carboxy-4-methyl-2-oxopentanoate. The product decarboxylates to 4-methyl-2 oxopentanoate. This is 3-isopropylmalate dehydrogenase (leuB) from Thermus aquaticus.